The following is a 479-amino-acid chain: MSAVLKPTPVSTADQAIADLSLAAWGRKEIKIAETEMPGLMAIREEFSKAQPLKGARITGSLHMTIQTAVLIETLQALGATVRWASCNIFSTQDHAAAAIAAAGTPVFAIKGESLKDYWDYTHAIFDFGPKGSQGEGPNMILDDGGDATLLMHLGQRAEKDLGVLSKPTSEEERILYAAIKAKLAVDPTWYTRKSAEIIGVTEETTTGVHRLNEMSAKGTLLFRAINVNDSVTKSKFDNLYGCRESLVDGIKRATDVMIAGKVACVAGYGDVGKGSAQALRALSAQVWVTEIDPINALQAAMEGYKVVTMEYAADKADIFVTTTGNRDVIRHEHMAAMKDQAIVCNIGHFDNEIDVASIEKYEWEEIKPQVDHITFPDGKKIILLAKGRLVNLGCGTGHPSFVMSSSFANQTIAQIELFTKPDAYQAGKVYVLPKHLDEKVARLHLKKVGAMLTELTDEQAAYIGVSKNGPYKPDTYRY.

Positions 65, 144, and 204 each coordinate substrate. An NAD(+)-binding site is contributed by 205-207 (TTT). Residues lysine 234 and aspartate 238 each coordinate substrate. Residues asparagine 239, 268–273 (GYGDVG), glutamate 291, asparagine 326, 347–349 (IGH), and asparagine 392 contribute to the NAD(+) site.

The protein belongs to the adenosylhomocysteinase family. It depends on NAD(+) as a cofactor.

Its subcellular location is the cytoplasm. The enzyme catalyses S-adenosyl-L-homocysteine + H2O = L-homocysteine + adenosine. The protein operates within amino-acid biosynthesis; L-homocysteine biosynthesis; L-homocysteine from S-adenosyl-L-homocysteine: step 1/1. Its function is as follows. May play a key role in the regulation of the intracellular concentration of adenosylhomocysteine. In Variovorax paradoxus (strain S110), this protein is Adenosylhomocysteinase.